Reading from the N-terminus, the 347-residue chain is UDP-3-O-acylglucosamine N-acyltransferase (347 aa).

H241 (proton acceptor) is an active-site residue.

It belongs to the transferase hexapeptide repeat family. LpxD subfamily. As to quaternary structure, homotrimer.

It carries out the reaction a UDP-3-O-[(3R)-3-hydroxyacyl]-alpha-D-glucosamine + a (3R)-hydroxyacyl-[ACP] = a UDP-2-N,3-O-bis[(3R)-3-hydroxyacyl]-alpha-D-glucosamine + holo-[ACP] + H(+). It functions in the pathway bacterial outer membrane biogenesis; LPS lipid A biosynthesis. Functionally, catalyzes the N-acylation of UDP-3-O-acylglucosamine using 3-hydroxyacyl-ACP as the acyl donor. Is involved in the biosynthesis of lipid A, a phosphorylated glycolipid that anchors the lipopolysaccharide to the outer membrane of the cell. This is UDP-3-O-acylglucosamine N-acyltransferase from Neisseria gonorrhoeae (strain NCCP11945).